A 439-amino-acid chain; its full sequence is MMRVRFPLLVLLGTVFLASVCVSLKVREDENNPFYLRSSNSFQTLFENQNGRIRLLQRFNKRSPQLENLRDYRIVQFQSKPNTILLPHHADADFLLFVLSGRAILTLVNNDDRDSYNLHPGDAQRIPAGTTYYLVNPHDHQNLKIIKLAIPVNKPGRYDDFFLSSTQAQQSYLQGFSHNILETSFHSEFEEINRVLFGEEEEQRQQEGVIVELSKEQIRQLSRRAKSSSRKTISSEDEPFNLRSRNPIYSNNFGKFFEITPEKNPQLRDLDIFLSSVDINEGALLLPHFNSKAIVILVINEGDANIELVGIKEQQQKQKQEEEPLEVQRYRAELSEDDVFVIPAAYPFVVNATSNLNFLAFGINAENNQRNFLAGEKDNVVRQIERQVQELAFPGSAQDVERLLKKQRESYFVDAQPQQKEEGSKGRKGPFPSILGALY.

The signal sequence occupies residues 1 to 23 (MMRVRFPLLVLLGTVFLASVCVS). 2 consecutive Cupin type-1 domains span residues 34-193 (FYLR…EEIN) and 240-401 (FNLR…QDVE). N-linked (GlcNAc...) asparagine glycosylation is present at N351. The interval 411–439 (YFVDAQPQQKEEGSKGRKGPFPSILGALY) is disordered. A necessary for sorting to protein storage vacuole region spans residues 430-439 (PFPSILGALY).

This sequence belongs to the 7S seed storage protein family. In terms of assembly, the alpha-, alpha'-, and beta-subunits associate in various combinations to form trimeric proteins. In terms of processing, the N-linked glycans are not essential for the folding and assembly into trimers. In terms of tissue distribution, expressed in seeds. Not detected in cotyledons or in mature plants.

It is found in the vacuole. The protein resides in the aleurone grain. It localises to the endoplasmic reticulum. The protein localises to the protein storage vacuole. Functionally, seed storage protein. Accumulates during seed development and is hydrolyzed after germination to provide a carbon and nitrogen source for the developing seedling. The polypeptide is Beta-conglycinin beta subunit 1 (Glycine max (Soybean)).